A 1171-amino-acid chain; its full sequence is DExH-box ATP-dependent RNA helicase DExH15 chloroplastic (1171 aa).

The N-terminal 58 residues, 1-58, are a transit peptide targeting the chloroplast; the sequence is MNTLPVVSLTASSSFKFFHFPSLHRSLSHSPNFSFTKSLILNPNHLSFKSTLNSLSPS. Polar residues predominate over residues 53 to 62; it reads NSLSPSQSQL. The segment at 53–111 is disordered; it reads NSLSPSQSQLYEEEDDEEEEEEDEDDDDEAADEYDNISDEIRNSDDDDDDEETEFSVDL. Acidic residues-rich tracts occupy residues 63 to 90 and 97 to 107; these read YEEEDDEEEEEEDEDDDDEAADEYDNIS and DDDDDDEETEF. One can recognise a Helicase ATP-binding domain in the interval 163–327; it reads IEAFLRGSSV…WIGEIHGKTE (165 aa). Position 176 to 183 (176 to 183) interacts with ATP; it reads APTSSGKT. A DEVH box motif is present at residues 275–278; that stretch reads DEVH. The 197-residue stretch at 424-620 folds into the Helicase C-terminal domain; the sequence is QISDTLWHLQ…ASYGMVLNLV (197 aa).

The protein belongs to the DExH box helicase family.

It localises to the plastid. The protein resides in the chloroplast. Its subcellular location is the cytoplasmic granule. The enzyme catalyses ATP + H2O = ADP + phosphate + H(+). Its function is as follows. RNA helicase involved in group II intron splicing. Essential protein required during embryogenesis. Involved in post-transcriptional gene silencing. Modulates the determination of cell fate. Necessary for normal plasmodesmata (PD) development and aperture regulation. This is DExH-box ATP-dependent RNA helicase DExH15 chloroplastic (ISE2) from Arabidopsis thaliana (Mouse-ear cress).